Here is a 221-residue protein sequence, read N- to C-terminus: Eukaryotic translation initiation factor 3 subunit K (221 aa).

The PCI domain maps to 46 to 207 (YDLEANLACL…NIKTKHITEK (162 aa)).

The protein belongs to the eIF-3 subunit K family. In terms of assembly, component of the eukaryotic translation initiation factor 3 (eIF-3) complex.

It is found in the cytoplasm. Its function is as follows. Component of the eukaryotic translation initiation factor 3 (eIF-3) complex, which is involved in protein synthesis of a specialized repertoire of mRNAs and, together with other initiation factors, stimulates binding of mRNA and methionyl-tRNAi to the 40S ribosome. The eIF-3 complex specifically targets and initiates translation of a subset of mRNAs involved in cell proliferation. This is Eukaryotic translation initiation factor 3 subunit K from Culex quinquefasciatus (Southern house mosquito).